The chain runs to 79 residues: Large ribosomal subunit protein bL28 (79 aa).

Positions 1–26 (MAKVCQVTGKRPQSGNNVSHANKKTN) are disordered. Residues 11–20 (RPQSGNNVSH) are compositionally biased toward polar residues.

Belongs to the bacterial ribosomal protein bL28 family.

The chain is Large ribosomal subunit protein bL28 from Coxiella burnetii (strain CbuK_Q154) (Coxiella burnetii (strain Q154)).